The chain runs to 537 residues: DNA-directed primase/polymerase protein (537 aa).

A coiled-coil region spans residues Met-1–Lys-22. Residues Arg-76, Asp-114–Glu-116, Lys-165–His-169, Arg-270–Arg-273, and Lys-279 each bind substrate. Mn(2+)-binding residues include Asp-114 and Glu-116. Zn(2+) is bound by residues Cys-401, His-408, Cys-428, and Cys-433. The Zinc knuckle motif motif lies at Cys-401 to Lys-434. A disordered region spans residues Ser-462–Ser-481. The tract at residues Ser-462 to Asn-536 is interaction with RPA1. Low complexity predominate over residues Thr-468–Thr-478. 2 short sequence motifs (RPA1-binding motif) span residues Trp-494–Glu-507 and Asp-524–Glu-532.

Belongs to the eukaryotic-type primase small subunit family. In terms of assembly, interacts with RPA1; leading to recruitment to chromatin and stimulate DNA primase activity. Interacts with SSBP1. Interacts with POLDIP2; leading to enhance DNA polymerase activity. Mn(2+) is required as a cofactor.

The protein localises to the nucleus. It is found in the mitochondrion matrix. The protein resides in the chromosome. The catalysed reaction is ssDNA + n NTP = ssDNA/pppN(pN)n-1 hybrid + (n-1) diphosphate.. It catalyses the reaction DNA(n) + a 2'-deoxyribonucleoside 5'-triphosphate = DNA(n+1) + diphosphate. Its function is as follows. DNA primase and DNA polymerase required to tolerate replication-stalling lesions by bypassing them. Required to facilitate mitochondrial and nuclear replication fork progression by initiating de novo DNA synthesis using dNTPs and acting as an error-prone DNA polymerase able to bypass certain DNA lesions. Shows a high capacity to tolerate DNA damage lesions such as 8oxoG and abasic sites in DNA. Provides different translesion synthesis alternatives when DNA replication is stalled: able to synthesize DNA primers downstream of lesions, such as ultraviolet (UV) lesions, R-loops and G-quadruplexes, to allow DNA replication to continue. Can also realign primers ahead of 'unreadable lesions' such as abasic sites and 6-4 photoproduct (6-4 pyrimidine-pyrimidinone), thereby skipping the lesion. Repriming avoids fork degradation while leading to accumulation of internal ssDNA gaps behind the forks. Also able to incorporate nucleotides opposite DNA lesions such as 8oxoG, like a regular translesion synthesis DNA polymerase. Also required for reinitiating stalled forks after UV damage during nuclear DNA replication. Required for mitochondrial DNA (mtDNA) synthesis and replication, by reinitiating synthesis after UV damage or in the presence of chain-terminating nucleotides. Prevents APOBEC family-mediated DNA mutagenesis by repriming downstream of abasic site to prohibit error-prone translesion synthesis. Has non-overlapping function with POLH. In addition to its role in DNA damage response, also required to maintain efficient nuclear and mitochondrial DNA replication in unperturbed cells. This is DNA-directed primase/polymerase protein from Mus musculus (Mouse).